The following is a 158-amino-acid chain: 2-C-methyl-D-erythritol 2,4-cyclodiphosphate synthase (158 aa).

Residues Asp10 and His12 each contribute to the a divalent metal cation site. Residues 10–12 (DVH) and 36–37 (HS) each bind 4-CDP-2-C-methyl-D-erythritol 2-phosphate. His44 provides a ligand contact to a divalent metal cation. 4-CDP-2-C-methyl-D-erythritol 2-phosphate is bound by residues 58 to 60 (DIG), 63 to 67 (FSDTD), and Arg144.

The protein belongs to the IspF family. As to quaternary structure, homotrimer. The cofactor is a divalent metal cation.

It carries out the reaction 4-CDP-2-C-methyl-D-erythritol 2-phosphate = 2-C-methyl-D-erythritol 2,4-cyclic diphosphate + CMP. The protein operates within isoprenoid biosynthesis; isopentenyl diphosphate biosynthesis via DXP pathway; isopentenyl diphosphate from 1-deoxy-D-xylulose 5-phosphate: step 4/6. Functionally, involved in the biosynthesis of isopentenyl diphosphate (IPP) and dimethylallyl diphosphate (DMAPP), two major building blocks of isoprenoid compounds. Catalyzes the conversion of 4-diphosphocytidyl-2-C-methyl-D-erythritol 2-phosphate (CDP-ME2P) to 2-C-methyl-D-erythritol 2,4-cyclodiphosphate (ME-CPP) with a corresponding release of cytidine 5-monophosphate (CMP). This Burkholderia vietnamiensis (strain G4 / LMG 22486) (Burkholderia cepacia (strain R1808)) protein is 2-C-methyl-D-erythritol 2,4-cyclodiphosphate synthase.